The chain runs to 526 residues: Glucose-6-phosphate isomerase (526 aa).

Glu343 (proton donor) is an active-site residue. Residues His374 and Lys494 contribute to the active site.

The protein belongs to the GPI family.

It is found in the cytoplasm. The catalysed reaction is alpha-D-glucose 6-phosphate = beta-D-fructose 6-phosphate. The protein operates within carbohydrate biosynthesis; gluconeogenesis. Its pathway is carbohydrate degradation; glycolysis; D-glyceraldehyde 3-phosphate and glycerone phosphate from D-glucose: step 2/4. Its function is as follows. Catalyzes the reversible isomerization of glucose-6-phosphate to fructose-6-phosphate. In Dechloromonas aromatica (strain RCB), this protein is Glucose-6-phosphate isomerase.